The primary structure comprises 769 residues: Cap-specific mRNA (nucleoside-2'-O-)-methyltransferase 2 (769 aa).

An Adrift-type SAM-dependent 2'-O-MTase domain is found at 109-322 (ELCTQAWCKF…VYVVCLYYKG (214 aa)). Lysine 117 is an active-site residue. The S-adenosyl-L-methionine site is built by glycine 148, tryptophan 167, and aspartate 235. Aspartate 235 is an active-site residue. Lysine 275 serves as the catalytic Proton acceptor.

Its subcellular location is the nucleus. It is found in the cytoplasm. It catalyses the reaction a 5'-end (N(7)-methyl 5'-triphosphoguanosine)-(2'-O-methyl-ribonucleoside)-(ribonucleotide) in mRNA + S-adenosyl-L-methionine = a 5'-end (N(7)-methyl 5'-triphosphoguanosine)-(2'-O-methyl-ribonucleoside)-(2'-O-methyl-ribonucleotide) in mRNA + S-adenosyl-L-homocysteine + H(+). In terms of biological role, S-adenosyl-L-methionine-dependent methyltransferase that mediates mRNA cap2 2'-O-ribose methylation to the 5'-cap structure of mRNAs. Methylates the ribose of the second nucleotide of a m(7)GpppG-capped mRNA and small nuclear RNA (snRNA) (cap0) to produce m(7)GpppRmpNm (cap2). Recognizes a guanosine cap on RNA independently of its N(7) methylation status. Display cap2 methylation on both cap0 and cap1. Displays a preference for cap1 RNAs. This is Cap-specific mRNA (nucleoside-2'-O-)-methyltransferase 2 (CMTR2) from Pongo abelii (Sumatran orangutan).